Consider the following 308-residue polypeptide: Limonin dehydrogenase (308 aa).

This sequence belongs to the aldehyde dehydrogenase family.

It localises to the periplasm. Completely inhibited by HgCl(2), CoCl(2) and CaCl(2). Functionally, catalyzes the NAD(+)-dependent conversion of limonin. The sequence is that of Limonin dehydrogenase from Pseudomonas putida (Arthrobacter siderocapsulatus).